Consider the following 96-residue polypeptide: Large ribosomal subunit protein bL21 (96 aa).

It belongs to the bacterial ribosomal protein bL21 family. As to quaternary structure, part of the 50S ribosomal subunit. Contacts protein L20.

This protein binds to 23S rRNA in the presence of protein L20. The chain is Large ribosomal subunit protein bL21 from Prosthecochloris aestuarii (strain DSM 271 / SK 413).